The following is a 281-amino-acid chain: 33 kDa chaperonin (281 aa).

Cystine bridges form between C229–C231 and C262–C265.

This sequence belongs to the HSP33 family. In terms of processing, under oxidizing conditions two disulfide bonds are formed involving the reactive cysteines. Under reducing conditions zinc is bound to the reactive cysteines and the protein is inactive.

It is found in the cytoplasm. In terms of biological role, redox regulated molecular chaperone. Protects both thermally unfolding and oxidatively damaged proteins from irreversible aggregation. Plays an important role in the bacterial defense system toward oxidative stress. The polypeptide is 33 kDa chaperonin (Pseudoalteromonas translucida (strain TAC 125)).